The primary structure comprises 805 residues: DNA gyrase subunit B (805 aa).

Residues 435–550 (SEIFIVEGDS…RGYIYIAQPP (116 aa)) enclose the Toprim domain. Mg(2+) contacts are provided by glutamate 441, aspartate 515, and aspartate 517.

The protein belongs to the type II topoisomerase GyrB family. As to quaternary structure, heterotetramer, composed of two GyrA and two GyrB chains. In the heterotetramer, GyrA contains the active site tyrosine that forms a transient covalent intermediate with DNA, while GyrB binds cofactors and catalyzes ATP hydrolysis. It depends on Mg(2+) as a cofactor. Requires Mn(2+) as cofactor. Ca(2+) is required as a cofactor.

Its subcellular location is the cytoplasm. The enzyme catalyses ATP-dependent breakage, passage and rejoining of double-stranded DNA.. A type II topoisomerase that negatively supercoils closed circular double-stranded (ds) DNA in an ATP-dependent manner to modulate DNA topology and maintain chromosomes in an underwound state. Negative supercoiling favors strand separation, and DNA replication, transcription, recombination and repair, all of which involve strand separation. Also able to catalyze the interconversion of other topological isomers of dsDNA rings, including catenanes and knotted rings. Type II topoisomerases break and join 2 DNA strands simultaneously in an ATP-dependent manner. This chain is DNA gyrase subunit B, found in Caulobacter vibrioides (strain ATCC 19089 / CIP 103742 / CB 15) (Caulobacter crescentus).